Reading from the N-terminus, the 413-residue chain is Multifunctional CCA protein (413 aa).

Residues glycine 8 and arginine 11 each coordinate ATP. Glycine 8 and arginine 11 together coordinate CTP. Mg(2+) contacts are provided by aspartate 21 and aspartate 23. Residues arginine 91, arginine 137, and arginine 140 each coordinate ATP. 3 residues coordinate CTP: arginine 91, arginine 137, and arginine 140. An HD domain is found at 228 to 329; the sequence is TGIHTLMVLA…IKIFDKADLW (102 aa).

Belongs to the tRNA nucleotidyltransferase/poly(A) polymerase family. Bacterial CCA-adding enzyme type 1 subfamily. As to quaternary structure, monomer. Can also form homodimers and oligomers. Mg(2+) is required as a cofactor. Requires Ni(2+) as cofactor.

It carries out the reaction a tRNA precursor + 2 CTP + ATP = a tRNA with a 3' CCA end + 3 diphosphate. The catalysed reaction is a tRNA with a 3' CCA end + 2 CTP + ATP = a tRNA with a 3' CCACCA end + 3 diphosphate. Catalyzes the addition and repair of the essential 3'-terminal CCA sequence in tRNAs without using a nucleic acid template. Adds these three nucleotides in the order of C, C, and A to the tRNA nucleotide-73, using CTP and ATP as substrates and producing inorganic pyrophosphate. tRNA 3'-terminal CCA addition is required both for tRNA processing and repair. Also involved in tRNA surveillance by mediating tandem CCA addition to generate a CCACCA at the 3' terminus of unstable tRNAs. While stable tRNAs receive only 3'-terminal CCA, unstable tRNAs are marked with CCACCA and rapidly degraded. This is Multifunctional CCA protein from Shewanella woodyi (strain ATCC 51908 / MS32).